A 464-amino-acid polypeptide reads, in one-letter code: Asparagine--tRNA ligase (464 aa).

The protein belongs to the class-II aminoacyl-tRNA synthetase family. As to quaternary structure, homodimer.

The protein localises to the cytoplasm. It catalyses the reaction tRNA(Asn) + L-asparagine + ATP = L-asparaginyl-tRNA(Asn) + AMP + diphosphate + H(+). The protein is Asparagine--tRNA ligase of Clostridium botulinum (strain Alaska E43 / Type E3).